The chain runs to 142 residues: Large ribosomal subunit protein uL11 (142 aa).

Belongs to the universal ribosomal protein uL11 family. As to quaternary structure, part of the ribosomal stalk of the 50S ribosomal subunit. Interacts with L10 and the large rRNA to form the base of the stalk. L10 forms an elongated spine to which L12 dimers bind in a sequential fashion forming a multimeric L10(L12)X complex. One or more lysine residues are methylated.

Forms part of the ribosomal stalk which helps the ribosome interact with GTP-bound translation factors. The sequence is that of Large ribosomal subunit protein uL11 from Proteus vulgaris.